The following is a 788-amino-acid chain: Phosphoribosylformylglycinamidine synthase subunit PurL (788 aa).

Residue His50 is part of the active site. ATP contacts are provided by Tyr53 and Lys92. Glu94 provides a ligand contact to Mg(2+). Residues Ser95–His98 and Arg117 contribute to the substrate site. His96 serves as the catalytic Proton acceptor. Mg(2+) is bound at residue Asp118. Gln241 lines the substrate pocket. Asp269 contributes to the Mg(2+) binding site. Glu313–Gln315 contributes to the substrate binding site. 2 residues coordinate ATP: Asp524 and Gly561. Residue Asn562 participates in Mg(2+) binding. Ser564 is a binding site for substrate.

It belongs to the FGAMS family. As to quaternary structure, monomer. Part of the FGAM synthase complex composed of 1 PurL, 1 PurQ and 2 PurS subunits.

The protein resides in the cytoplasm. It catalyses the reaction N(2)-formyl-N(1)-(5-phospho-beta-D-ribosyl)glycinamide + L-glutamine + ATP + H2O = 2-formamido-N(1)-(5-O-phospho-beta-D-ribosyl)acetamidine + L-glutamate + ADP + phosphate + H(+). It functions in the pathway purine metabolism; IMP biosynthesis via de novo pathway; 5-amino-1-(5-phospho-D-ribosyl)imidazole from N(2)-formyl-N(1)-(5-phospho-D-ribosyl)glycinamide: step 1/2. Its function is as follows. Part of the phosphoribosylformylglycinamidine synthase complex involved in the purines biosynthetic pathway. Catalyzes the ATP-dependent conversion of formylglycinamide ribonucleotide (FGAR) and glutamine to yield formylglycinamidine ribonucleotide (FGAM) and glutamate. The FGAM synthase complex is composed of three subunits. PurQ produces an ammonia molecule by converting glutamine to glutamate. PurL transfers the ammonia molecule to FGAR to form FGAM in an ATP-dependent manner. PurS interacts with PurQ and PurL and is thought to assist in the transfer of the ammonia molecule from PurQ to PurL. The protein is Phosphoribosylformylglycinamidine synthase subunit PurL of Nostoc punctiforme (strain ATCC 29133 / PCC 73102).